The chain runs to 352 residues: Geranylgeranyl transferase type-1 subunit beta (352 aa).

4 PFTB repeats span residues 135–180 (VNKK…FILD), 187–228 (KESA…SLLG), 236–276 (FKEQ…MMID), and 283–325 (FASI…SFGN). Geranylgeranyl diphosphate contacts are provided by residues 213–215 (HGG) and 255–258 (RTNK). Residues aspartate 261 and cysteine 263 each contribute to the Zn(2+) site. 264 to 267 (YAFW) provides a ligand contact to geranylgeranyl diphosphate. Histidine 313 contacts Zn(2+).

Belongs to the protein prenyltransferase subunit beta family. As to quaternary structure, heterodimer of an alpha and a beta subunit. It depends on Zn(2+) as a cofactor. The cofactor is Mg(2+).

It catalyses the reaction geranylgeranyl diphosphate + L-cysteinyl-[protein] = S-geranylgeranyl-L-cysteinyl-[protein] + diphosphate. Its function is as follows. Catalyzes the transfer of a geranyl-geranyl moiety from geranyl-geranyl pyrophosphate to a cysteine at the fourth position from the C-terminus of proteins having the C-terminal sequence Cys-aliphatic-aliphatic-X. This Dictyostelium discoideum (Social amoeba) protein is Geranylgeranyl transferase type-1 subunit beta (pggt1b).